We begin with the raw amino-acid sequence, 178 residues long: Inner membrane-spanning protein YciB (178 aa).

Helical transmembrane passes span 12-32 (LFFA…VAIV), 50-70 (PMQW…LVLH), 74-94 (FIMW…LISD), 120-140 (LTFA…FVAF), and 145-165 (AVWV…FVLA).

It belongs to the YciB family.

The protein localises to the cell inner membrane. Functionally, plays a role in cell envelope biogenesis, maintenance of cell envelope integrity and membrane homeostasis. The polypeptide is Inner membrane-spanning protein YciB (Laribacter hongkongensis (strain HLHK9)).